The following is a 723-amino-acid chain: Envelope glycoprotein H (723 aa).

An N-terminal signal peptide occupies residues 1 to 23; it reads MSPATRFTVISCLVVSLITPSET. The Virion surface segment spans residues 24-700; sequence SSWFDPFIEW…IIDIRQTSIF (677 aa). N-linked (GlcNAc...) asparagine; by host glycosylation is found at Asn39, Asn45, Asn144, and Asn174. An interaction with gL region spans residues 197–263; that stretch reads HQFAIVLTFT…QSYRDDLLIV (67 aa). N-linked (GlcNAc...) asparagine; by host glycans are attached at residues Asn270, Asn340, Asn411, Asn543, Asn621, and Asn681. The chain crosses the membrane as a helical span at residues 701–721; the sequence is MIMLYCSLGVLLLYGLYRLLH. Residues 722–723 are Intravirion-facing; it reads MI.

This sequence belongs to the herpesviridae glycoprotein H family. Interacts with glycoprotein L (gL); this interaction is necessary for the correct processing and cell surface expression of gH. The heterodimer gH/gL seems to interact with gB trimers during fusion. N-glycosylated, O-glycosylated, and sialylated.

The protein resides in the virion membrane. It is found in the host cell membrane. It localises to the host endosome membrane. Functionally, the heterodimer glycoprotein H-glycoprotein L is required for the fusion of viral and plasma membranes leading to virus entry into the host cell. Following initial binding to host receptor, membrane fusion is mediated by the fusion machinery composed of gB and the heterodimer gH/gL. May also be involved in the fusion between the virion envelope and the outer nuclear membrane during virion morphogenesis. The sequence is that of Envelope glycoprotein H from Guinea pig cytomegalovirus (strain 22122) (GPCMV).